Reading from the N-terminus, the 392-residue chain is 26S proteasome regulatory subunit 8 homolog (392 aa).

Residue 176–183 participates in ATP binding; sequence GPPGTGKT.

This sequence belongs to the AAA ATPase family. The 26S proteasome consists of a 20S proteasome core and two 19S regulatory subunits. The 20S proteasome core is composed of 28 subunits that are arranged in four stacked rings, resulting in a barrel-shaped structure. The two end rings are each formed by seven alpha subunits, and the two central rings are each formed by seven beta subunits. The catalytic chamber with the active sites is on the inside of the barrel.

It localises to the cytoplasm. The protein localises to the nucleus. Acts as a regulatory subunit of the 26S proteasome which degrades poly-ubiquitinated proteins in the cytoplasm and in the nucleus. It is essential for the regulated turnover of proteins and for the removal of misfolded proteins. The proteasome is a multicatalytic proteinase complex that is characterized by its ability to cleave peptides with Arg, Phe, Tyr, Leu, and Glu adjacent to the leaving group at neutral or slightly basic pH. The polypeptide is 26S proteasome regulatory subunit 8 homolog (RPT6) (Encephalitozoon cuniculi (strain GB-M1) (Microsporidian parasite)).